A 507-amino-acid chain; its full sequence is 2,3-bisphosphoglycerate-independent phosphoglycerate mutase (507 aa).

Mn(2+) is bound by residues Asp11 and Ser61. Residue Ser61 is the Phosphoserine intermediate of the active site. Substrate is bound by residues His122, 150–151 (RD), Arg182, Arg188, 257–260 (RPDR), and Lys332. Positions 397, 401, 438, 439, and 456 each coordinate Mn(2+).

This sequence belongs to the BPG-independent phosphoglycerate mutase family. In terms of assembly, monomer. Requires Mn(2+) as cofactor.

It catalyses the reaction (2R)-2-phosphoglycerate = (2R)-3-phosphoglycerate. Its pathway is carbohydrate degradation; glycolysis; pyruvate from D-glyceraldehyde 3-phosphate: step 3/5. In terms of biological role, catalyzes the interconversion of 2-phosphoglycerate and 3-phosphoglycerate. The protein is 2,3-bisphosphoglycerate-independent phosphoglycerate mutase of Mycoplasma genitalium (strain ATCC 33530 / DSM 19775 / NCTC 10195 / G37) (Mycoplasmoides genitalium).